The sequence spans 1161 residues: MKKFSRMPKSEGGSGGGAAGGGAGGAGAGAGCGSGGSSVGVRVFAVGRHQVTLEESLAEGGFSTVFLVRTHGGIRCALKRMYVNNMPDLNVCKREITIMKELSGHKNIVGYLDCAVNSISDNVWEVLILMEYCRAGQVVNQMNKKLQTGFTEPEVLQIFCDTCEAVARLHQCKTPIIHRDLKVENILLNDGGNYVLCDFGSATNKFLNPQKDGVNVVEEEIKKYTTLSYRAPEMINLYGGKPITTKADIWALGCLLYKLCFFTLPFGESQVAICDGNFTIPDNSRYSRNIHCLIRFMLEPDPEHRPDIFQVSYFAFKFAKKDCPVSNINNSSIPSALPEPMTASEAAARKSQIKARITDTIGPTETSIAPRQRPKANSATTATPSVLTIQSSATPVKVLAPGEFGNHRPKGALRPGNGPEILLGQGPPQQPPQQHRVLQQLQQGDWRLQQLHLQHRHPHQQQQQQQQQQQQQQQQQQQQQQQQQQQHHHHHHHHLLQDAYMQQYQHATQQQQMLQQQFLMHSVYQPQPSASQYPTMMPQYQQAFFQQQMLAQHQPSQQQASPEYLTSPQEFSPALVSYTSSLPAQVGTIMDSSYSANRSVADKEAIANFTNQKNISNPPDMSGWNPFGEDNFSKLTEEELLDREFDLLRSNRLEERASSDKNVDSLSAPHNHPPEDPFGSVPFISHSGSPEKKAEHSSINQENGTANPIKNGKTSPASKDQRTGKKTSVQGQVQKGNDESESDFESDPPSPKSSEEEEQDDEEVLQGEQGDFNDDDTEPENLGHRPLLMDSEDEEEEEKHSSDSDYEQAKAKYSDMSSVYRDRSGSGPTQDLNTILLTSAQLSSDVAVETPKQEFDVFGAVPFFAVRAQQPQQEKNEKNLPQHRFPAAGLEQEEFDVFTKAPFSKKVNVQECHAVGPEAHTIPGYPKSVDVFGSTPFQPFLTSTSKSESNEDLFGLVPFDEITGSQQQKVKQRSLQKLSSRQRRTKQDMSKSNGKRHHGTPTSTKKTLKPTYRTPERARRHKKVGRRDSQSSNEFLTISDSKENISVALTDGKDRGNVLQPEESLLDPFGAKPFHSPDLSWHPPHQGLSDIRADHNTVLPGRPRQNSLHGSFHSADVLKMDDFGAVPFTELVVQSITPHQSQQSQPVELDPFGAAPFPSKQ.

Residues 1–20 (MKKFSRMPKSEGGSGGGAAG) form a disordered region. At S14 the chain carries Phosphoserine. One can recognise a Protein kinase domain in the interval 51-316 (VTLEESLAEG…DIFQVSYFAF (266 aa)). ATP is bound by residues 57 to 65 (LAEGGFSTV) and K79. D180 serves as the catalytic Proton acceptor. 4 disordered regions span residues 358–439 (TDTI…RVLQ), 453–495 (LQHR…HHHL), 610–630 (TNQK…FGED), and 655–832 (ERAS…TQDL). Polar residues predominate over residues 361–394 (IGPTETSIAPRQRPKANSATTATPSVLTIQSSAT). 2 stretches are compositionally biased toward low complexity: residues 422–439 (LLGQ…RVLQ) and 460–485 (QQQQ…QQQQ). Residues 610-619 (TNQKNISNPP) show a composition bias toward polar residues. Phosphoserine is present on S689. Composition is skewed to polar residues over residues 697–718 (SSIN…SPAS) and 726–735 (KTSVQGQVQK). S742 carries the phosphoserine modification. Acidic residues predominate over residues 755–779 (EEEEQDDEEVLQGEQGDFNDDDTEP). Residues 798 to 813 (EKHSSDSDYEQAKAKY) are compositionally biased toward basic and acidic residues. A phosphoserine mark is found at S817 and S818. The residue at position 834 (T834) is a Phosphothreonine. Phosphoserine is present on S928. Residues 965–1035 (SQQQKVKQRS…RRDSQSSNEF (71 aa)) form a disordered region. Basic residues predominate over residues 970-984 (VKQRSLQKLSSRQRR). A compositionally biased stretch (low complexity) spans 1000–1011 (TPTSTKKTLKPT). Phosphoserine is present on residues S1029, S1031, S1032, S1039, S1041, S1076, S1107, and S1111. The segment covering 1137-1146 (TPHQSQQSQP) has biased composition (polar residues). Residues 1137–1161 (TPHQSQQSQPVELDPFGAAPFPSKQ) are disordered.

Belongs to the protein kinase superfamily. Ser/Thr protein kinase family. Autophosphorylated.

It localises to the nucleus. It catalyses the reaction L-seryl-[protein] + ATP = O-phospho-L-seryl-[protein] + ADP + H(+). The catalysed reaction is L-threonyl-[protein] + ATP = O-phospho-L-threonyl-[protein] + ADP + H(+). In terms of biological role, may be involved in osteoblast differentiation. The sequence is that of BMP-2-inducible protein kinase (BMP2K) from Homo sapiens (Human).